The chain runs to 155 residues: Regulatory protein RecX (155 aa).

This sequence belongs to the RecX family.

It is found in the cytoplasm. Functionally, modulates RecA activity. This chain is Regulatory protein RecX, found in Pseudomonas fluorescens (strain SBW25).